The chain runs to 81 residues: ATP synthase subunit c (81 aa).

2 helical membrane-spanning segments follow: residues 7–27 (AASV…PGLG) and 57–77 (FAFM…LLFA).

Belongs to the ATPase C chain family. In terms of assembly, F-type ATPases have 2 components, F(1) - the catalytic core - and F(0) - the membrane proton channel. F(1) has five subunits: alpha(3), beta(3), gamma(1), delta(1), epsilon(1). F(0) has four main subunits: a(1), b(1), b'(1) and c(10-14). The alpha and beta chains form an alternating ring which encloses part of the gamma chain. F(1) is attached to F(0) by a central stalk formed by the gamma and epsilon chains, while a peripheral stalk is formed by the delta, b and b' chains.

It is found in the cellular thylakoid membrane. In terms of biological role, f(1)F(0) ATP synthase produces ATP from ADP in the presence of a proton or sodium gradient. F-type ATPases consist of two structural domains, F(1) containing the extramembraneous catalytic core and F(0) containing the membrane proton channel, linked together by a central stalk and a peripheral stalk. During catalysis, ATP synthesis in the catalytic domain of F(1) is coupled via a rotary mechanism of the central stalk subunits to proton translocation. Its function is as follows. Key component of the F(0) channel; it plays a direct role in translocation across the membrane. A homomeric c-ring of between 10-14 subunits forms the central stalk rotor element with the F(1) delta and epsilon subunits. This chain is ATP synthase subunit c, found in Prochlorococcus marinus (strain MIT 9301).